A 373-amino-acid polypeptide reads, in one-letter code: Methylmalonyl-CoA decarboxylase subunit beta (373 aa).

10 helical membrane passes run 17-37, 38-58, 81-101, 106-126, 132-152, 156-176, 206-226, 257-277, 280-300, and 343-363; these read FLAF…LLYL, AFAR…CLLA, IFPP…PLIA, LLLG…AMML, EAAA…YLAT, PHLL…VPLI, IVFP…ITSL, VTIF…FLSL, IKII…GVLF, and FLLM…AVAA.

This sequence belongs to the GcdB/MmdB/OadB family. As to quaternary structure, the methylmalonyl-CoA decarboxylase is composed of five subunits: the carboxyltransferase alpha subunit (MmdA), the tunnel beta subunit (MmdB), the biotin-containing gamma subunit (MmdC), and the delta (MmdD) and epsilon (MmdE) subunits. The N-terminus is blocked.

It localises to the cell membrane. It carries out the reaction (S)-methylmalonyl-CoA + Na(+)(in) + H(+)(out) = propanoyl-CoA + Na(+)(out) + CO2. With respect to regulation, completely inhibited by avidin. Its function is as follows. Tunnel subunit of the sodium ion pump methylmalonyl-CoA decarboxylase, which converts the chemical energy of a decarboxylation reaction into an electrochemical gradient of Na(+) ions across the cytoplasmic membrane, thereby creating a sodium ion motive force that is used for ATP synthesis. The beta subunit catalyzes the decarboxylation of the carboxybiotin carrier protein and the coupled export of Na(+) ions. Can also convert malonyl-CoA into acetyl-CoA. This chain is Methylmalonyl-CoA decarboxylase subunit beta, found in Veillonella parvula (Staphylococcus parvulus).